A 103-amino-acid polypeptide reads, in one-letter code: Large ribosomal subunit protein bL21 (103 aa).

The protein belongs to the bacterial ribosomal protein bL21 family. Part of the 50S ribosomal subunit. Contacts protein L20.

Its function is as follows. This protein binds to 23S rRNA in the presence of protein L20. This Haemophilus influenzae (strain ATCC 51907 / DSM 11121 / KW20 / Rd) protein is Large ribosomal subunit protein bL21.